A 248-amino-acid polypeptide reads, in one-letter code: Thioredoxin-like protein AAED1, chloroplastic (248 aa).

The N-terminal 52 residues, 1–52 (MAIALSSSSTITSITLQPKLKTIHGLGTVLPGYSVKSHFRSVSLRRSAVVVS), are a transit peptide targeting the chloroplast. An N-acetylalanine modification is found at Ala-53.

It belongs to the peroxiredoxin-like PRXL2 family. PRXL2C subfamily.

Its subcellular location is the plastid. It is found in the chloroplast. In Arabidopsis thaliana (Mouse-ear cress), this protein is Thioredoxin-like protein AAED1, chloroplastic.